The primary structure comprises 316 residues: Cyclin-dependent kinase inhibitor 1C (316 aa).

Position 107 is an omega-N-methylarginine (Arg107). The interval 124-153 is disordered; that stretch reads ESLDGLEEAPEQLPSVPVPAPASTPPPVPV. Residues 139-153 show a composition bias toward pro residues; the sequence is VPVPAPASTPPPVPV. A run of 9 repeats spans residues 156–159, 160–163, 180–183, 184–187, 188–191, 198–201, 202–205, 206–209, and 210–213. Residues 156–213 are 9 X 4 AA repeats of P-A-P-A; it reads PAPAPAPAPVAAPVAAPVAVAVLAPAPAPAPAPAPAPAPVAAPAPAPAPAPAPAPAPA. Residues 181-217 show a composition bias toward pro residues; that stretch reads APAPAPAPAPAPAPVAAPAPAPAPAPAPAPAPAPAPD. A disordered region spans residues 181–260; sequence APAPAPAPAP…AAGTAAASAN (80 aa). Residues 223 to 233 are compositionally biased toward polar residues; it reads SAEQGANQGQR. Residues 251–260 are compositionally biased toward low complexity; it reads AAGTAAASAN. Ser268 is modified (phosphoserine). The Nuclear localization signal motif lies at 278–281; the sequence is KRKR. The interval 278–316 is disordered; that stretch reads KRKRSAPEKSSGDVPAPCPSPSAAPGVGSVEQTPRKRLR.

Belongs to the CDI family. Interacts with PCNA. In terms of tissue distribution, expressed in the heart, brain, lung, skeletal muscle, kidney, pancreas and testis. Expressed in the eye. High levels are seen in the placenta while low levels are seen in the liver.

Its subcellular location is the nucleus. Its function is as follows. Potent tight-binding inhibitor of several G1 cyclin/CDK complexes (cyclin E-CDK2, cyclin D2-CDK4, and cyclin A-CDK2) and, to lesser extent, of the mitotic cyclin B-CDC2. Negative regulator of cell proliferation. May play a role in maintenance of the non-proliferative state throughout life. This Homo sapiens (Human) protein is Cyclin-dependent kinase inhibitor 1C (CDKN1C).